The primary structure comprises 61 residues: Small ribosomal subunit protein uS14 (61 aa).

The Zn(2+) site is built by Cys-24, Cys-27, Cys-40, and Cys-43.

The protein belongs to the universal ribosomal protein uS14 family. Zinc-binding uS14 subfamily. Part of the 30S ribosomal subunit. Contacts proteins S3 and S10. It depends on Zn(2+) as a cofactor.

In terms of biological role, binds 16S rRNA, required for the assembly of 30S particles and may also be responsible for determining the conformation of the 16S rRNA at the A site. This is Small ribosomal subunit protein uS14 from Oleidesulfovibrio alaskensis (strain ATCC BAA-1058 / DSM 17464 / G20) (Desulfovibrio alaskensis).